The sequence spans 409 residues: Peptidase T (409 aa).

Histidine 78 provides a ligand contact to Zn(2+). Residue aspartate 80 is part of the active site. Aspartate 139 is a binding site for Zn(2+). The Proton acceptor role is filled by glutamate 173. Glutamate 174, aspartate 196, and histidine 378 together coordinate Zn(2+).

This sequence belongs to the peptidase M20B family. Zn(2+) serves as cofactor.

It localises to the cytoplasm. It catalyses the reaction Release of the N-terminal residue from a tripeptide.. Functionally, cleaves the N-terminal amino acid of tripeptides. This is Peptidase T from Shewanella sediminis (strain HAW-EB3).